The primary structure comprises 708 residues: Fatty acid oxidation complex subunit alpha (708 aa).

The tract at residues methionine 1 to proline 190 is enoyl-CoA hydratase. The 3-hydroxyacyl-CoA dehydrogenase stretch occupies residues aspartate 310–glutamine 708.

In the N-terminal section; belongs to the enoyl-CoA hydratase/isomerase family. The protein in the central section; belongs to the 3-hydroxyacyl-CoA dehydrogenase family. Heterotetramer of two alpha chains (FadJ) and two beta chains (FadI).

Its subcellular location is the cytoplasm. The enzyme catalyses a (3S)-3-hydroxyacyl-CoA = a (2E)-enoyl-CoA + H2O. It carries out the reaction a 4-saturated-(3S)-3-hydroxyacyl-CoA = a (3E)-enoyl-CoA + H2O. The catalysed reaction is a (3S)-3-hydroxyacyl-CoA + NAD(+) = a 3-oxoacyl-CoA + NADH + H(+). It catalyses the reaction (3S)-3-hydroxybutanoyl-CoA = (3R)-3-hydroxybutanoyl-CoA. Its pathway is lipid metabolism; fatty acid beta-oxidation. In terms of biological role, catalyzes the formation of a hydroxyacyl-CoA by addition of water on enoyl-CoA. Also exhibits 3-hydroxyacyl-CoA epimerase and 3-hydroxyacyl-CoA dehydrogenase activities. This chain is Fatty acid oxidation complex subunit alpha, found in Idiomarina loihiensis (strain ATCC BAA-735 / DSM 15497 / L2-TR).